We begin with the raw amino-acid sequence, 305 residues long: Type II restriction enzyme SsoII (305 aa).

The enzyme catalyses Endonucleolytic cleavage of DNA to give specific double-stranded fragments with terminal 5'-phosphates.. Functionally, a P subtype restriction enzyme that recognizes the double-stranded sequence 5'-CCNGG-3' and cleaves before C-1. The protein is Type II restriction enzyme SsoII (ssoIIR) of Shigella sonnei.